The primary structure comprises 1286 residues: X-linked retinitis pigmentosa GTPase regulator-interacting protein 1 (1286 aa).

A disordered region spans residues 144-193 (QVGHRQLHTAGAPVPEKPKRGPRDRLSYTAPPSFKEHATNENRGEVASKP). Composition is skewed to basic and acidic residues over residues 159-169 (EKPKRGPRDRL) and 177-189 (FKEHATNENRGEV). The stretch at 294-584 (KAQLTEVQEA…LEGILRSHDL (291 aa)) forms a coiled coil. A C2 domain is found at 781 to 906 (GGRKAQEEEF…AKNESIKGDF (126 aa)). Disordered stretches follow at residues 934 to 1008 (SFLK…RKHG) and 1058 to 1108 (EEEE…PMSQ). 3 stretches are compositionally biased toward basic and acidic residues: residues 940-960 (AQTKGKDTKDSSKISSEEEKA), 988-998 (HGGERKEKEHQ), and 1070-1084 (KQKEPLHPVNDKESS). Over residues 1085 to 1096 (EQGSEVSEAQTT) the composition is skewed to polar residues. The tract at residues 1091 to 1281 (SEAQTTDSDD…VLHAIYKEMT (191 aa)) is interaction with RPGR.

Belongs to the RPGRIP1 family. In terms of assembly, forms homodimers and elongated homopolymers. Interacts with RPGR. Interacts with NPHP4. Interacts with NEK4. Interacts with SPATA7. Interacts with CEP290/NPHP6; mediating the association between RPGR and CEP290/NPHP6. As to expression, strong expression in retina, with weaker expression in testis. Expressed in other neurons such as amacrine cells. Colocalizes with RGPR in the outer segment of rod photoreceptors and cone outer segments.

It is found in the cell projection. The protein resides in the cilium. In terms of biological role, may function as scaffolding protein. Required for normal location of RPGR at the connecting cilium of photoreceptor cells. Required for normal disk morphogenesis and disk organization in the outer segment of photoreceptor cells and for survival of photoreceptor cells. This Homo sapiens (Human) protein is X-linked retinitis pigmentosa GTPase regulator-interacting protein 1 (RPGRIP1).